Consider the following 1019-residue polypeptide: Type VI secretion system spike protein VgrG2b (1019 aa).

The interval 268–291 is disordered; that stretch reads AGRPFTESRLRGHRRDARVASVSG. His935 lines the Zn(2+) pocket. The active site involves Glu936. Zn(2+) is bound by residues His939 and Glu983.

The protein belongs to the VgrG protein family. As to quaternary structure, interacts with Tla3; this interaction promotes Tle3 loading onto VgrG2b. Interacts with host gamma-tubulin ring complex components GCP1 and GCP4. Zn(2+) serves as cofactor.

It is found in the secreted. In terms of biological role, part of the H2 type VI secretion system (H2-T6SS) specialized secretion system, which delivers several virulence factors in both prokaryotic and eukaryotic cells during infection. Forms the spike at the tip of the elongating tube probably formed by haemolysin co-regulated protein 2b/Hcp2b. Allows the delivery of the Tle3 antibacterial toxin to target cells where it exerts its toxicity. Additionally, acts directly as an effector and promotes internalization by interacting with the host gamma-tubulin ring complex. Elicits toxicity also in the bacterial periplasm and disrupts bacterial cell morphology. Toxicity is counteracted by a cognate immunity protein. The sequence is that of Type VI secretion system spike protein VgrG2b (vgrG2b) from Pseudomonas aeruginosa (strain ATCC 15692 / DSM 22644 / CIP 104116 / JCM 14847 / LMG 12228 / 1C / PRS 101 / PAO1).